The sequence spans 250 residues: Low affinity immunoglobulin gamma Fc region receptor III-A (250 aa).

Positions 1-16 (MWQLLPPAALLLLVSA) are cleaved as a signal peptide. The Extracellular portion of the chain corresponds to 17–208 (DTQTADPSKA…VSSFFLPWHQ (192 aa)). Ig-like C2-type domains are found at residues 23–105 (PSKA…LEVH) and 99–189 (PVKL…VQIT). Intrachain disulfides connect cysteine 47/cysteine 89 and cysteine 128/cysteine 172. N-linked (GlcNAc...) asparagine glycans are attached at residues asparagine 56 and asparagine 63. Asparagine 180 carries an N-linked (GlcNAc...) asparagine glycan. A helical transmembrane segment spans residues 209–225 (ITFCLVMGVLFAVDTGL). The Cytoplasmic segment spans residues 226-250 (YFSVRRHLQSSEEWRDGKVTWSKGP).

Forms a heterooligomeric complex with ITAM-containing signaling subunits FCER1G. Interacts (via transmembrane domain) with signaling subunits; this interaction is a prerequisite for receptor complex expression on the cell surface and intracellular signal transduction. Binds the Fc region of antigen-complexed IgG. As to expression, expressed in gamma-delta T cells.

The protein resides in the cell membrane. Functionally, receptor for the invariable Fc fragment of immunoglobulin gamma (IgG). Optimally activated upon binding of clustered antigen-IgG complexes displayed on cell surfaces, triggers lysis of antibody-coated cells, a process known as antibody-dependent cellular cytotoxicity (ADCC). Does not bind free monomeric IgG, thus avoiding inappropriate effector cell activation in the absence of antigenic trigger. Mediates IgG effector functions on natural killer (NK) cells. Binds antigen-IgG complexes generated upon infection and triggers NK cell-dependent cytokine production and degranulation to limit viral load and propagation. Fc-binding subunit that associates with FCER1G adapters to form functional signaling complexes. Following the engagement of antigen-IgG complexes, triggers phosphorylation of immunoreceptor tyrosine-based activation motif (ITAM)-containing adapter with subsequent activation of phosphatidylinositol 3-kinase signaling and sustained elevation of intracellular calcium that ultimately drive NK cell activation. Mediates enhanced ADCC in response to afucosylated IgGs. This Bos taurus (Bovine) protein is Low affinity immunoglobulin gamma Fc region receptor III-A.